The primary structure comprises 404 residues: Phosphoglycerate kinase (404 aa).

Substrate is bound by residues 26 to 28, arginine 41, 64 to 67, arginine 124, and arginine 161; these read DFN and HLGR. ATP-binding positions include lysine 212, glycine 301, glutamate 332, and 359-362; that span reads GGDS.

It belongs to the phosphoglycerate kinase family. As to quaternary structure, monomer.

The protein resides in the cytoplasm. The enzyme catalyses (2R)-3-phosphoglycerate + ATP = (2R)-3-phospho-glyceroyl phosphate + ADP. It functions in the pathway carbohydrate degradation; glycolysis; pyruvate from D-glyceraldehyde 3-phosphate: step 2/5. This Mesomycoplasma hyopneumoniae (strain 232) (Mycoplasma hyopneumoniae) protein is Phosphoglycerate kinase.